Here is a 198-residue protein sequence, read N- to C-terminus: Segregation and condensation protein B (198 aa).

The segment at P167–E198 is disordered. The segment covering P172–E181 has biased composition (acidic residues).

This sequence belongs to the ScpB family. As to quaternary structure, homodimer. Homodimerization may be required to stabilize the binding of ScpA to the Smc head domains. Component of a cohesin-like complex composed of ScpA, ScpB and the Smc homodimer, in which ScpA and ScpB bind to the head domain of Smc. The presence of the three proteins is required for the association of the complex with DNA.

Its subcellular location is the cytoplasm. In terms of biological role, participates in chromosomal partition during cell division. May act via the formation of a condensin-like complex containing Smc and ScpA that pull DNA away from mid-cell into both cell halves. This chain is Segregation and condensation protein B, found in Listeria innocua serovar 6a (strain ATCC BAA-680 / CLIP 11262).